The sequence spans 827 residues: Glycerol-3-phosphate acyltransferase (827 aa).

The short motif at cysteine 325–methionine 330 is the HXXXXD motif element.

This sequence belongs to the GPAT/DAPAT family.

The protein resides in the cell inner membrane. The enzyme catalyses sn-glycerol 3-phosphate + an acyl-CoA = a 1-acyl-sn-glycero-3-phosphate + CoA. Its pathway is phospholipid metabolism; CDP-diacylglycerol biosynthesis; CDP-diacylglycerol from sn-glycerol 3-phosphate: step 1/3. This is Glycerol-3-phosphate acyltransferase from Shigella flexneri serotype 5b (strain 8401).